A 423-amino-acid polypeptide reads, in one-letter code: Phosphoribosylamine--glycine ligase (423 aa).

The ATP-grasp domain occupies 107 to 314 (KAFMAKYNIP…LSDLVEAAID (208 aa)). 133–194 (VNQKGAPIVI…EDFLQGEEAS (62 aa)) serves as a coordination point for ATP. Mg(2+) contacts are provided by Glu284 and Asn286.

Belongs to the GARS family. Requires Mg(2+) as cofactor. It depends on Mn(2+) as a cofactor.

The enzyme catalyses 5-phospho-beta-D-ribosylamine + glycine + ATP = N(1)-(5-phospho-beta-D-ribosyl)glycinamide + ADP + phosphate + H(+). It participates in purine metabolism; IMP biosynthesis via de novo pathway; N(1)-(5-phospho-D-ribosyl)glycinamide from 5-phospho-alpha-D-ribose 1-diphosphate: step 2/2. The chain is Phosphoribosylamine--glycine ligase from Neisseria meningitidis serogroup A / serotype 4A (strain DSM 15465 / Z2491).